The following is a 180-amino-acid chain: NADH-quinone oxidoreductase subunit I (180 aa).

4Fe-4S ferredoxin-type domains are found at residues 50–80 (LTRD…LQKA) and 90–119 (EFFR…LTPD). [4Fe-4S] cluster contacts are provided by Cys60, Cys63, Cys66, Cys70, Cys99, Cys102, Cys105, and Cys109.

The protein belongs to the complex I 23 kDa subunit family. As to quaternary structure, NDH-1 is composed of 13 different subunits. Subunits NuoA, H, J, K, L, M, N constitute the membrane sector of the complex. [4Fe-4S] cluster serves as cofactor.

It is found in the cell inner membrane. The enzyme catalyses a quinone + NADH + 5 H(+)(in) = a quinol + NAD(+) + 4 H(+)(out). In terms of biological role, NDH-1 shuttles electrons from NADH, via FMN and iron-sulfur (Fe-S) centers, to quinones in the respiratory chain. The immediate electron acceptor for the enzyme in this species is believed to be ubiquinone. Couples the redox reaction to proton translocation (for every two electrons transferred, four hydrogen ions are translocated across the cytoplasmic membrane), and thus conserves the redox energy in a proton gradient. The protein is NADH-quinone oxidoreductase subunit I of Shigella sonnei (strain Ss046).